The sequence spans 158 residues: NADH-quinone oxidoreductase subunit B (158 aa).

[4Fe-4S] cluster is bound by residues Cys-37, Cys-38, Cys-102, and Cys-132.

It belongs to the complex I 20 kDa subunit family. NDH-1 is composed of 14 different subunits. Subunits NuoB, C, D, E, F, and G constitute the peripheral sector of the complex. [4Fe-4S] cluster serves as cofactor.

The protein resides in the cell inner membrane. It carries out the reaction a quinone + NADH + 5 H(+)(in) = a quinol + NAD(+) + 4 H(+)(out). NDH-1 shuttles electrons from NADH, via FMN and iron-sulfur (Fe-S) centers, to quinones in the respiratory chain. Couples the redox reaction to proton translocation (for every two electrons transferred, four hydrogen ions are translocated across the cytoplasmic membrane), and thus conserves the redox energy in a proton gradient. The polypeptide is NADH-quinone oxidoreductase subunit B (Nitrosomonas europaea (strain ATCC 19718 / CIP 103999 / KCTC 2705 / NBRC 14298)).